The following is a 360-amino-acid chain: MLIHVIIFMIITTMQFSTTCHAYVINVTNVNVSMFPAILVFGDSTIDTGNNNYIKTYIRANFPPYGCNFPGHNATGRFSNGKLIPDFIASLMGIKDTVPPFLDPHLSDSDIITGVCFASAGSGYDNLTDRATSTLSVDKQADMLRSYVERLSQIVGDEKAASIVSEALVIVSSGTNDFNLNLYDTPSRRQKLGVDGYQSFILSNVHNFVQELYDIGCRKIMVLGLPPVGCLPIQMTMAMQKQNERRCIDKQNSDSQEFNQKLKNSLTEMQSNLTGSVIFYGDIYGALFDMATNPQRYGLKETTRGCCGTGEIELAYLCNALTRICPNPNQYLFWDDIHPSQIAYIVISLSLVEQIFHVLS.

Positions 1 to 22 (MLIHVIIFMIITTMQFSTTCHA) are cleaved as a signal peptide. N-linked (GlcNAc...) asparagine glycosylation is found at Asn-26 and Asn-31. Residue Ser-44 is the Nucleophile of the active site. N-linked (GlcNAc...) asparagine glycosylation is found at Asn-73, Asn-126, and Asn-272. Active-site residues include Asp-335 and His-338.

Belongs to the 'GDSL' lipolytic enzyme family.

The protein localises to the secreted. In Arabidopsis thaliana (Mouse-ear cress), this protein is GDSL esterase/lipase At1g06990.